Reading from the N-terminus, the 205-residue chain is Transcriptional regulator GfcR (205 aa).

This sequence belongs to the purine/pyrimidine phosphoribosyltransferase family. GfcR subfamily.

The chain is Transcriptional regulator GfcR from Methanococcus maripaludis (strain C5 / ATCC BAA-1333).